The primary structure comprises 308 residues: Spermidine synthase 2 (308 aa).

A PABS domain is found at 17-254 (PGWFSEISPL…GVIGFMLCST (238 aa)). An S-adenosyl 3-(methylsulfanyl)propylamine-binding site is contributed by Gln-48. Residue Tyr-78 participates in putrescine binding. S-adenosyl 3-(methylsulfanyl)propylamine is bound by residues Gln-79, Asp-103, Glu-123, 154–155 (DG), and Asp-173. Asp-173 serves as the catalytic Proton acceptor. Putrescine is bound by residues 173–176 (DSSD) and Tyr-242.

The protein belongs to the spermidine/spermine synthase family.

The catalysed reaction is S-adenosyl 3-(methylsulfanyl)propylamine + putrescine = S-methyl-5'-thioadenosine + spermidine + H(+). Its pathway is amine and polyamine biosynthesis; spermidine biosynthesis; spermidine from putrescine: step 1/1. The polypeptide is Spermidine synthase 2 (Hyoscyamus niger (Black henbane)).